Here is a 213-residue protein sequence, read N- to C-terminus: Isopentenyl-diphosphate Delta-isomerase (213 aa).

The segment covering 1–10 has biased composition (basic and acidic residues); sequence MRDSMSEADR. A disordered region spans residues 1-34; sequence MRDSMSEADRSSPGSGKTDREDETAENATQDVIA. 3 residues coordinate Mn(2+): His51, His58, and His95. One can recognise a Nudix hydrolase domain in the interval 56–193; it reads VRHRAFTCLL…RQLRLCPWFE (138 aa). Glu113 is a binding site for Mg(2+). The Mn(2+) site is built by Glu142 and Glu144. Residue Glu144 is part of the active site.

It belongs to the IPP isomerase type 1 family. Mg(2+) serves as cofactor. It depends on Mn(2+) as a cofactor.

Its subcellular location is the cytoplasm. The enzyme catalyses isopentenyl diphosphate = dimethylallyl diphosphate. Its pathway is isoprenoid biosynthesis; dimethylallyl diphosphate biosynthesis; dimethylallyl diphosphate from isopentenyl diphosphate: step 1/1. Functionally, catalyzes the 1,3-allylic rearrangement of the homoallylic substrate isopentenyl (IPP) to its highly electrophilic allylic isomer, dimethylallyl diphosphate (DMAPP). The protein is Isopentenyl-diphosphate Delta-isomerase of Halobacterium salinarum (strain ATCC 700922 / JCM 11081 / NRC-1) (Halobacterium halobium).